The sequence spans 152 residues: UPF0266 membrane protein YobD (152 aa).

3 helical membrane-spanning segments follow: residues Leu6 to Met26, Val45 to His65, and Ala67 to Ile87.

It belongs to the UPF0266 family.

It localises to the cell inner membrane. The protein is UPF0266 membrane protein YobD of Salmonella enteritidis PT4 (strain P125109).